Consider the following 125-residue polypeptide: Small ribosomal subunit protein uS12 (125 aa).

3-methylthioaspartic acid is present on Asp-89. Positions 105–125 (AGVKDRKQARSKYGAKRPKAA) are disordered. Basic residues predominate over residues 113 to 125 (ARSKYGAKRPKAA).

The protein belongs to the universal ribosomal protein uS12 family. As to quaternary structure, part of the 30S ribosomal subunit. Contacts proteins S8 and S17. May interact with IF1 in the 30S initiation complex.

Its function is as follows. With S4 and S5 plays an important role in translational accuracy. Functionally, interacts with and stabilizes bases of the 16S rRNA that are involved in tRNA selection in the A site and with the mRNA backbone. Located at the interface of the 30S and 50S subunits, it traverses the body of the 30S subunit contacting proteins on the other side and probably holding the rRNA structure together. The combined cluster of proteins S8, S12 and S17 appears to hold together the shoulder and platform of the 30S subunit. The sequence is that of Small ribosomal subunit protein uS12 from Methylobacillus flagellatus (strain ATCC 51484 / DSM 6875 / VKM B-1610 / KT).